A 140-amino-acid chain; its full sequence is DegV domain-containing 15.5 kDa protein (140 aa).

The 137-residue stretch at 4 to 140 folds into the DegV domain; it reads QIIVTDSTSD…ELVLLQSKKI (137 aa). Hexadecanoate-binding residues include threonine 61 and serine 93.

In terms of biological role, may bind long-chain fatty acids, such as palmitate, and may play a role in lipid transport or fatty acid metabolism. The polypeptide is DegV domain-containing 15.5 kDa protein (Staphylococcus aureus).